Consider the following 206-residue polypeptide: AT-hook motif nuclear-localized protein 28 (206 aa).

Disordered regions lie at residues 1 to 21 and 160 to 206; these read METVGRPRGRPRGSKNKPKAP and TEEE…PSPY. Positions 5-17 form a DNA-binding region, a.T hook; sequence GRPRGRPRGSKNK. Residues 7 to 18 show a composition bias toward basic residues; sequence PRGRPRGSKNKP. Residues 27–173 enclose the PPC domain; that stretch reads DPPMSPYILE…QRNSAEGEEE (147 aa).

The protein resides in the nucleus. Functionally, transcription factor that specifically binds AT-rich DNA sequences related to the nuclear matrix attachment regions (MARs). This Arabidopsis thaliana (Mouse-ear cress) protein is AT-hook motif nuclear-localized protein 28.